The chain runs to 806 residues: Hyperosmolality-gated Ca2+ permeable channel 1.8 (806 aa).

10 consecutive transmembrane segments (helical) span residues 7–27, 102–122, 157–177, 375–395, 427–447, 467–487, 512–532, 576–596, 626–646, and 650–670; these read IGVSALINLFGAFLFLIAFAV, IYTLGLKIFAPVMVLALVVLV, KFFFHIAVEYIFTFWACFMLY, LVIGVSVFALVFFYMIPIAFV, FLPGLALKIFLWILPTVLLIM, YYYFMLVNVFLGSIIAGTAFE, ATFFITYIMVDGWAGIAGEIL, FLLGIVYTAVTPILLPFILIF, VHGRIIASLLISQLLLMGLLA, and AADSTPLLIILPILTLSFHKY. The interval 726 to 786 is disordered; sequence SSSSSSEKET…HYASAYEQSS (61 aa). The segment covering 731–750 has biased composition (basic and acidic residues); sequence SEKETHQEETPEVRVDKHET. The residue at position 735 (Thr-735) is a Phosphothreonine. Residues 751–762 show a composition bias toward polar residues; it reads QSSSPVTELGTS. Residues 775–786 show a composition bias toward low complexity; sequence SSHYASAYEQSS.

Belongs to the CSC1 (TC 1.A.17) family.

The protein resides in the golgi apparatus membrane. The protein localises to the cell membrane. Functionally, acts as an osmosensitive calcium-permeable cation channel. The chain is Hyperosmolality-gated Ca2+ permeable channel 1.8 from Arabidopsis thaliana (Mouse-ear cress).